The following is a 581-amino-acid chain: MSAFELVTELSARFKDAVLGEQMTADRFPTVWIRPDATIDVHRFLRQEIDRPFKMLVDLWAIDETARKHRDGLPPSGITIASHLMSHERNADIRIKIALDAEYPRAKSIGSVFPNAPWYEREAYDMFGVEFEAQPHSLRILLPPGWEGHPMRKTQPGRATERPLFNMTASLFDAKEHALAADPEKFGLPTHRDGVELMILNYGPHSMATHGVFRIVLALDGEEIVAARPDIGFHHRGAEKMAERQTWHNFLPYTDRVDYLGGVMGEMPYLQAVEKACGIKVPDRALTVRIMLSEMFRIMNHLLFYGTMAQDTGAMSPVFYMFTDRERGYRVIESITGARMHPGFFRIGGLSMDLPDGWDRLVREFLDWMPSRLDDYEGMVLRNEIFRARTKGIAAYDTAMALDWGVTGPGLRATGYAWDVRKARPYAGFENFDFEIPVGHAGDCYDRTVVRVEEIRQSLKIIRQCVDNMPSGPIKADHPLTTPPPRERMLHDIETMIHHFVSTSWGPVLPPGEYTGQVETVRGLTQFALISDGEPSSYRTRIRTPSFAHLQMISAVAPGMMVADLVAYLGSIDYVMSDVDR.

The segment at 1–172 (MSAFELVTEL…PLFNMTASLF (172 aa)) is NADH dehydrogenase I subunit C. Residues 196-581 (ELMILNYGPH…IDYVMSDVDR (386 aa)) are NADH dehydrogenase I subunit D.

It in the N-terminal section; belongs to the complex I 30 kDa subunit family. The protein in the C-terminal section; belongs to the complex I 49 kDa subunit family. NDH-1 is composed of 13 different subunits. Subunits NuoB, CD, E, F, and G constitute the peripheral sector of the complex.

It localises to the cell inner membrane. The catalysed reaction is a quinone + NADH + 5 H(+)(in) = a quinol + NAD(+) + 4 H(+)(out). Its function is as follows. NDH-1 shuttles electrons from NADH, via FMN and iron-sulfur (Fe-S) centers, to quinones in the respiratory chain. The immediate electron acceptor for the enzyme in this species is believed to be ubiquinone. Couples the redox reaction to proton translocation (for every two electrons transferred, four hydrogen ions are translocated across the cytoplasmic membrane), and thus conserves the redox energy in a proton gradient. The chain is NADH-quinone oxidoreductase subunit C/D from Rhodopseudomonas palustris (strain ATCC BAA-98 / CGA009).